The following is a 398-amino-acid chain: MAKDKFERTKPHVNVGTIGHIDHGKTTTTGAILAVQAAKGLAKAKGYSDIAKGGTVRDATKTVTIAVAHVEYESENRHYAHIDCPGHADFVKNMITGAAQMDGAILVVSAADGPMPQTKEHVLLGRQVGVPYIVVYLNKCDLVDDEELLELVELEVRELLSKYDYPGDDVPVVRGSSLPAYNNPSDPEASKCITELMEALDSHIPEPTREDDKPFLMAIEDVFSIEGRGTVATGRIERGVVKVGEEVEIIGLGPNSTKTTCTGVEMFRKEMNEGRSGDNVGCLLRGVKREDIQRGQVLAKPGSITPHTKFEAEVYCLSKDEGGRHTPFFSGYRPQFYFRTTDVTGTANLVGADMCMPGDNVKVEVELHKPIAMDDGVRFAIREGGRTVGSGVVTKILE.

The region spanning 10-208 (KPHVNVGTIG…ALDSHIPEPT (199 aa)) is the tr-type G domain. Residues 19 to 26 (GHIDHGKT) form a G1 region. GTP is bound at residue 19–26 (GHIDHGKT). Position 26 (Thr-26) interacts with Mg(2+). Residues 60-64 (TKTVT) are G2. A G3 region spans residues 83-86 (DCPG). GTP is bound by residues 83–87 (DCPGH) and 138–141 (NKCD). The tract at residues 138–141 (NKCD) is G4. The G5 stretch occupies residues 176 to 178 (SSL).

This sequence belongs to the TRAFAC class translation factor GTPase superfamily. Classic translation factor GTPase family. EF-Tu/EF-1A subfamily. In terms of assembly, monomer.

The protein localises to the cytoplasm. The catalysed reaction is GTP + H2O = GDP + phosphate + H(+). Its function is as follows. GTP hydrolase that promotes the GTP-dependent binding of aminoacyl-tRNA to the A-site of ribosomes during protein biosynthesis. This Rhodopirellula baltica (strain DSM 10527 / NCIMB 13988 / SH1) protein is Elongation factor Tu.